The primary structure comprises 714 residues: ATP-dependent zinc metalloprotease FtsH (714 aa).

Over 1–75 (MEKPRRLRPR…KNPMEPRQQQ (75 aa)) the chain is Cytoplasmic. A helical transmembrane segment spans residues 76–96 (FSLWYVLVTILAMLAIQTLFV). The Periplasmic segment spans residues 97–188 (SGHVETIPYS…FVGQPDNKWL (92 aa)). The chain crosses the membrane as a helical span at residues 189–209 (STILSWVVPAVIFFGIWSFLI). Topologically, residues 210–714 (KRVGGAAGSM…GKPDQKTQGT (505 aa)) are cytoplasmic. 280–287 (GAPGTGKT) is an ATP binding site. Position 502 (H502) interacts with Zn(2+). E503 is an active-site residue. Positions 506 and 579 each coordinate Zn(2+). The segment at 688-714 (PMPPPKPVANIEESTATGKPDQKTQGT) is disordered. Residues 699-714 (EESTATGKPDQKTQGT) show a composition bias toward polar residues.

This sequence in the central section; belongs to the AAA ATPase family. It in the C-terminal section; belongs to the peptidase M41 family. Homohexamer. Requires Zn(2+) as cofactor.

It localises to the cell inner membrane. Its function is as follows. Acts as a processive, ATP-dependent zinc metallopeptidase for both cytoplasmic and membrane proteins. Plays a role in the quality control of integral membrane proteins. The chain is ATP-dependent zinc metalloprotease FtsH from Ralstonia pickettii (strain 12J).